The following is a 472-amino-acid chain: 2-oxoisovalerate dehydrogenase subunit alpha 2, mitochondrial (472 aa).

185 to 187 (QYR) lines the thiamine diphosphate pocket. 3 residues coordinate K(+): S234, T239, and Q240.

The protein belongs to the BCKDHA family. In terms of assembly, heterotetramer of alpha and beta chains. The cofactor is thiamine diphosphate.

The protein localises to the mitochondrion matrix. The enzyme catalyses N(6)-[(R)-lipoyl]-L-lysyl-[protein] + 3-methyl-2-oxobutanoate + H(+) = N(6)-[(R)-S(8)-2-methylpropanoyldihydrolipoyl]-L-lysyl-[protein] + CO2. In terms of biological role, the branched-chain alpha-keto dehydrogenase complex catalyzes the overall conversion of alpha-keto acids to acyl-CoA and CO(2). It contains multiple copies of three enzymatic components: branched-chain alpha-keto acid decarboxylase (E1), lipoamide acyltransferase (E2) and lipoamide dehydrogenase (E3). The sequence is that of 2-oxoisovalerate dehydrogenase subunit alpha 2, mitochondrial from Arabidopsis thaliana (Mouse-ear cress).